A 73-amino-acid chain; its full sequence is Large ribosomal subunit protein uL29 (73 aa).

Belongs to the universal ribosomal protein uL29 family.

The sequence is that of Large ribosomal subunit protein uL29 from Synechococcus sp. (strain JA-2-3B'a(2-13)) (Cyanobacteria bacterium Yellowstone B-Prime).